The following is a 472-amino-acid chain: Trigger factor (472 aa).

Residues 172 to 257 (GDEVRFDFKG…IKEITSVKPQ (86 aa)) enclose the PPIase FKBP-type domain. 2 stretches are compositionally biased toward polar residues: residues 439-449 (NQPKDTASTLS) and 461-472 (KTSNTKKVASKK). The tract at residues 439 to 472 (NQPKDTASTLSKQEDKPKVAKAKTSNTKKVASKK) is disordered.

The protein belongs to the FKBP-type PPIase family. Tig subfamily.

The protein localises to the cytoplasm. The catalysed reaction is [protein]-peptidylproline (omega=180) = [protein]-peptidylproline (omega=0). Involved in protein export. Acts as a chaperone by maintaining the newly synthesized protein in an open conformation. Functions as a peptidyl-prolyl cis-trans isomerase. This Ureaplasma urealyticum serovar 10 (strain ATCC 33699 / Western) protein is Trigger factor.